Here is a 346-residue protein sequence, read N- to C-terminus: Elongation factor Ts (346 aa).

The interval 80 to 83 (TDFV) is involved in Mg(2+) ion dislocation from EF-Tu.

It belongs to the EF-Ts family.

It localises to the cytoplasm. Functionally, associates with the EF-Tu.GDP complex and induces the exchange of GDP to GTP. It remains bound to the aminoacyl-tRNA.EF-Tu.GTP complex up to the GTP hydrolysis stage on the ribosome. In Streptococcus pneumoniae (strain 70585), this protein is Elongation factor Ts.